The primary structure comprises 626 residues: Phosphomethylpyrimidine synthase (626 aa).

A disordered region spans residues 1–22; the sequence is MTKQEKAINLSESAQVDQQSVQ. Polar residues predominate over residues 10-22; it reads LSESAQVDQQSVQ. Residues Asn-232, Met-261, Tyr-290, His-326, 346–348, 387–390, and Glu-426 contribute to the substrate site; these read SRG and DGLR. His-430 is a Zn(2+) binding site. Residue Tyr-453 participates in substrate binding. His-494 is a binding site for Zn(2+). [4Fe-4S] cluster-binding residues include Cys-574, Cys-577, and Cys-582.

This sequence belongs to the ThiC family. Homodimer. It depends on [4Fe-4S] cluster as a cofactor.

It catalyses the reaction 5-amino-1-(5-phospho-beta-D-ribosyl)imidazole + S-adenosyl-L-methionine = 4-amino-2-methyl-5-(phosphooxymethyl)pyrimidine + CO + 5'-deoxyadenosine + formate + L-methionine + 3 H(+). It participates in cofactor biosynthesis; thiamine diphosphate biosynthesis. Catalyzes the synthesis of the hydroxymethylpyrimidine phosphate (HMP-P) moiety of thiamine from aminoimidazole ribotide (AIR) in a radical S-adenosyl-L-methionine (SAM)-dependent reaction. This is Phosphomethylpyrimidine synthase from Pseudomonas putida (strain ATCC 47054 / DSM 6125 / CFBP 8728 / NCIMB 11950 / KT2440).